The sequence spans 418 residues: MDIGDFVKLELENTTYSGTVMPSLNEDTVVIKMKSGYNVGLDKKKIKNIEILESGDKPKYGLPPLNLEKNPKLKNISILSTGGTVASRVDYKTGAVHPAFTADDLIRAVPELMDIANIKGKVILNILSENMLPAYWKMTADAIKEEIENGAEGIVIAHGTDTMHYTASALSFMVTSEVPIILVGAQRSSDRPSSDAALNIIAAVKAATEPIKGVYVLMHGETGDTVCHLHEGTKVRKLHSSRRDAFKSVNETPIAEINPFIKKVTYLRDVKSQDKSKIKEVVLNTDLEEKVALIKVYPGIDSEILKFYVDNGYKGIILEGTGLGHTPETFFEGIDYANENNVLVAMTTQTINGRVNMNVYSNGRELQAKGVIPCEDMLPEVAFVKLMHLLGNYGFEESKELMSKNIVGEINESINLEC.

Positions 74-405 (KNISILSTGG…EESKELMSKN (332 aa)) constitute an Asparaginase/glutaminase domain. Active-site residues include Thr84, Thr160, Asp161, and Lys237.

Belongs to the asparaginase 1 family. GatD subfamily. Heterodimer of GatD and GatE.

It carries out the reaction L-glutamyl-tRNA(Gln) + L-glutamine + ATP + H2O = L-glutaminyl-tRNA(Gln) + L-glutamate + ADP + phosphate + H(+). Allows the formation of correctly charged Gln-tRNA(Gln) through the transamidation of misacylated Glu-tRNA(Gln) in organisms which lack glutaminyl-tRNA synthetase. The reaction takes place in the presence of glutamine and ATP through an activated gamma-phospho-Glu-tRNA(Gln). The GatDE system is specific for glutamate and does not act on aspartate. This is Glutamyl-tRNA(Gln) amidotransferase subunit D from Methanococcus maripaludis (strain C5 / ATCC BAA-1333).